We begin with the raw amino-acid sequence, 90 residues long: ATP-dependent Clp protease adapter protein ClpS (90 aa).

Belongs to the ClpS family. As to quaternary structure, binds to the N-terminal domain of the chaperone ClpA.

Involved in the modulation of the specificity of the ClpAP-mediated ATP-dependent protein degradation. This is ATP-dependent Clp protease adapter protein ClpS from Helicobacter pylori (strain J99 / ATCC 700824) (Campylobacter pylori J99).